The chain runs to 96 residues: Citrate lyase acyl carrier protein (96 aa).

Ser-14 is modified (O-(phosphoribosyl dephospho-coenzyme A)serine).

The protein belongs to the CitD family. Oligomer with a subunit composition of (alpha,beta,gamma)6.

Its subcellular location is the cytoplasm. In terms of biological role, covalent carrier of the coenzyme of citrate lyase. The chain is Citrate lyase acyl carrier protein from Lactiplantibacillus plantarum (strain ATCC BAA-793 / NCIMB 8826 / WCFS1) (Lactobacillus plantarum).